The primary structure comprises 595 residues: Isoprene synthase, chloroplastic (595 aa).

A chloroplast-targeting transit peptide spans 1–37; that stretch reads MATELLCLHRPISLTHKLFRNPLPKVIQATPLTLKLR. Residue Asp-345 coordinates dimethylallyl diphosphate. Mg(2+) contacts are provided by Asp-345 and Asp-349. Positions 345–349 match the DDXXD motif motif; sequence DDIYD. Dimethylallyl diphosphate is bound by residues Glu-423, Arg-486, and Asn-489. Mg(2+) is bound by residues Asn-489, Ser-493, and Glu-497.

This sequence belongs to the terpene synthase family. Tpsb subfamily. Homodimer. Mg(2+) is required as a cofactor. The cofactor is Mn(2+).

The protein resides in the plastid. The protein localises to the chloroplast. The enzyme catalyses dimethylallyl diphosphate = isoprene + diphosphate. The protein operates within secondary metabolite biosynthesis; terpenoid biosynthesis. Its activity is regulated as follows. Competitive inhibition is mediated by geranyl diphosphate (GPP). Functionally, lyase that catalyzes the formation of isoprene from dimethylallyl diphosphate via a syn-periplanar elimination mechanism in which the diphosphate-leaving group serves as a general base. This is Isoprene synthase, chloroplastic from Populus canescens (Grey poplar).